We begin with the raw amino-acid sequence, 572 residues long: Terminal nucleotidyltransferase 4B (572 aa).

The tract at residues 1–105 (MYRSGERLLG…ADGGGVVYSG (105 aa)) is disordered. Polar residues predominate over residues 25–34 (ETTNNNNNHH). A compositionally biased stretch (low complexity) spans 36-76 (PGAWARRAGSSASSPPSASSSPHPSAAVPAADPADSASGSS). Over residues 89-102 (RAAGGGRADGGGVV) the composition is skewed to gly residues. Val151 participates in a covalent cross-link: Glycyl lysine isopeptide (Lys-Gly) (interchain with G-Cter in SUMO2). Residues Asp177 and Asp179 each contribute to the Mg(2+) site. Residues Gly240, Lys265, Ser283, Tyr284, Asn368, and Arg372 each coordinate ATP. One can recognise a PAP-associated domain in the interval 308–368 (NYGVLLIEFF…YIEDPLQPGN (61 aa)). The interval 435 to 572 (KNRPEPSCNG…RDAPLSDLCR (138 aa)) is disordered. The segment covering 446-464 (VSSSSATQSSSSDVDSDAT) has biased composition (low complexity). Lys470 participates in a covalent cross-link: Glycyl lysine isopeptide (Lys-Gly) (interchain with G-Cter in SUMO2). The span at 477–494 (STGNRVGSQDVSLESSQA) shows a compositional bias: polar residues. Ser484 carries the post-translational modification Phosphoserine. Residues Lys497, Lys512, and Lys526 each participate in a glycyl lysine isopeptide (Lys-Gly) (interchain with G-Cter in SUMO2) cross-link. Residues 499-514 (QSTQTTNTSNSTNKSQ) are compositionally biased toward low complexity. Polar residues predominate over residues 522-553 (RSSSKGFQGTTQTSHGSLMTNKQHQGKSNNQY). The Basic, involved in binding of the RNA primer signature appears at 557–563 (KKRKHKR).

Belongs to the DNA polymerase type-B-like family. As to quaternary structure, component of a nucleolar TRAMP-like complex, an ATP-dependent exosome regulatory complex consisting of a helicase (MTREX), an oligadenylate polymerase (TENT4B or TENT4A), and a substrate specific RNA-binding factor (ZCCHC7 or ZCCHC8). Several TRAMP-like complexes exist with specific compositions and are associated with nuclear, or nucleolar RNA exosomes. Interacts with CPEB1; the interaction is required for TENT4B-mediated translational control. The cofactor is Mg(2+). It depends on Mn(2+) as a cofactor.

It localises to the nucleus. The protein resides in the nucleolus. It is found in the cytoplasm. The catalysed reaction is RNA(n) + ATP = RNA(n)-3'-adenine ribonucleotide + diphosphate. Functionally, terminal nucleotidyltransferase that catalyzes preferentially the transfer of ATP and GTP on RNA 3' poly(A) tail creating a heterogeneous 3' poly(A) tail leading to mRNAs stabilization by protecting mRNAs from active deadenylation. Also functions as a catalytic subunit of a TRAMP-like complex which has a poly(A) RNA polymerase activity and is involved in a post-transcriptional quality control mechanism. Polyadenylation with short oligo(A) tails is required for the degradative activity of the exosome on several of its nuclear RNA substrates. Doesn't need a cofactor for polyadenylation activity (in vitro). Required for cytoplasmic polyadenylation of mRNAs involved in carbohydrate metabolism, including the glucose transporter SLC2A1/GLUT1. Plays a role in replication-dependent histone mRNA degradation, probably through terminal uridylation of mature histone mRNAs. May play a role in sister chromatid cohesion. Mediates 3' adenylation of the microRNA MIR21 followed by its 3'-to-5' trimming by the exoribonuclease PARN leading to degradation. Mediates 3' adenylation of H/ACA box snoRNAs (small nucleolar RNAs) followed by its 3'-to-5' trimming by the exoribonuclease PARN which enhances snoRNA stability and maturation. This is Terminal nucleotidyltransferase 4B from Homo sapiens (Human).